The primary structure comprises 204 residues: LexA repressor (204 aa).

Residues 29–49 constitute a DNA-binding region (H-T-H motif); sequence RAEIADIMGFQSKNAASDHLR. Residues Ser-123 and Lys-160 each act as for autocatalytic cleavage activity in the active site.

It belongs to the peptidase S24 family. Homodimer.

It carries out the reaction Hydrolysis of Ala-|-Gly bond in repressor LexA.. In terms of biological role, represses a number of genes involved in the response to DNA damage (SOS response), including recA and lexA. In the presence of single-stranded DNA, RecA interacts with LexA causing an autocatalytic cleavage which disrupts the DNA-binding part of LexA, leading to derepression of the SOS regulon and eventually DNA repair. This chain is LexA repressor, found in Alcanivorax borkumensis (strain ATCC 700651 / DSM 11573 / NCIMB 13689 / SK2).